The following is a 438-amino-acid chain: ATP-dependent protease ATPase subunit HslU (438 aa).

Residues Val-18, 60 to 65, Asp-252, Glu-317, and Arg-389 contribute to the ATP site; that span reads GVGKTE.

The protein belongs to the ClpX chaperone family. HslU subfamily. As to quaternary structure, a double ring-shaped homohexamer of HslV is capped on each side by a ring-shaped HslU homohexamer. The assembly of the HslU/HslV complex is dependent on binding of ATP.

It localises to the cytoplasm. Functionally, ATPase subunit of a proteasome-like degradation complex; this subunit has chaperone activity. The binding of ATP and its subsequent hydrolysis by HslU are essential for unfolding of protein substrates subsequently hydrolyzed by HslV. HslU recognizes the N-terminal part of its protein substrates and unfolds these before they are guided to HslV for hydrolysis. This chain is ATP-dependent protease ATPase subunit HslU, found in Saccharophagus degradans (strain 2-40 / ATCC 43961 / DSM 17024).